The following is a 190-amino-acid chain: Protein E6C (190 aa).

Positions 1 to 15 are enriched in pro residues; it reads MFGVAKPPPSPIPKP. Disordered regions lie at residues 1–110 and 160–190; these read MFGV…EGRR and PRTP…PPDD. Over residues 36-46 the composition is skewed to basic residues; that stretch reads ARQRASTRHRP. 2 stretches are compositionally biased toward pro residues: residues 162 to 171 and 181 to 190; these read TPGPVAPIPE and TRTPPPPPDD.

The polypeptide is Protein E6C (13) (Equus caballus (Horse)).